The chain runs to 358 residues: Src kinase-associated phosphoprotein 2 (358 aa).

2 positions are modified to phosphoserine: S5 and S9. The tract at residues 14–64 is homodimerization; that stretch reads PEEIRNLLADVETFVADTLKGENLSKKAKEKRESLIKKIKDVKSVYLQEFQ. Y75 bears the Phosphotyrosine mark. Phosphoserine occurs at positions 87 and 90. The region spanning 116–219 is the PH domain; sequence FVIKAGYLEK…WVQQLKFILQ (104 aa). 2 positions are modified to phosphotyrosine: Y151 and Y197. Residue S223 is modified to Phosphoserine. Positions 232 to 292 are disordered; the sequence is ERGELYDDVD…RDSVHHTSGD (61 aa). Over residues 255 to 270 the composition is skewed to acidic residues; the sequence is IDDEIYEELPEEEEDT. Phosphotyrosine; by FYN is present on Y260. Phosphoserine occurs at positions 272, 282, and 285. Residues 274–292 are compositionally biased toward basic and acidic residues; it reads KMDEQGKGSRDSVHHTSGD. The 62-residue stretch at 296-357 folds into the SH3 domain; it reads DYANFYQGLW…PKAYLMEMYD (62 aa).

The protein belongs to the SKAP family. Interacts with LAT, GRB2, PTK2B and PRAM1. Homodimer. Interacts with FYB1, which is required for SKAP2 protein stability. Interacts with PTPNS1. Part of a complex consisting of SKAP2, FYB1 and PTPNS1. Part of a complex consisting of SKAP2, FYB1 and PIRB. May interact with actin. May interact with FYN, HCK and LYN. Interacts with FASLG. Post-translationally, dephosphorylated on Tyr-75 by PTPN22. Phosphorylated by FYN on Tyr-260. In case of infection with Y.pseudotuberculosis, dephosphorylated by bacterial phosphatase yopH. Expressed in kidney, lung, liver, spleen, bone marrow and testis. Present in T-cells, B-cells, and all cells of the myelomonocytic lineage. Present in all brain regions, with highest levels in neurons from the Purkinje cell layer, hippocampal gyrus, cortex and substantia nigra (at protein level).

It is found in the cytoplasm. In terms of biological role, may be involved in B-cell and macrophage adhesion processes. In B-cells, may act by coupling the B-cell receptor (BCR) to integrin activation. May play a role in src signaling pathway. This Mus musculus (Mouse) protein is Src kinase-associated phosphoprotein 2 (Skap2).